A 226-amino-acid chain; its full sequence is Elongation factor G (226 aa).

The protein belongs to the GTP-binding elongation factor family. EF-G/EF-2 subfamily.

It is found in the cytoplasm. In terms of biological role, catalyzes the GTP-dependent ribosomal translocation step during translation elongation. During this step, the ribosome changes from the pre-translocational (PRE) to the post-translocational (POST) state as the newly formed A-site-bound peptidyl-tRNA and P-site-bound deacylated tRNA move to the P and E sites, respectively. Catalyzes the coordinated movement of the two tRNA molecules, the mRNA and conformational changes in the ribosome. In Neisseria gonorrhoeae, this protein is Elongation factor G (fusA).